A 448-amino-acid polypeptide reads, in one-letter code: Bifunctional protein GlmU (448 aa).

Residues 1-232 form a pyrophosphorylase region; the sequence is MTARSSLTIV…EDEVRGINTK (232 aa). Residues 11-14, K25, Q78, and 83-84 each bind UDP-N-acetyl-alpha-D-glucosamine; these read LAAG and GT. D108 contributes to the Mg(2+) binding site. UDP-N-acetyl-alpha-D-glucosamine contacts are provided by G144, E158, N173, and N230. Mg(2+) is bound at residue N230. A linker region spans residues 233-253; sequence AQLAQAEAAMQARLRQAAMDA. An N-acetyltransferase region spans residues 254-448; it reads GVTLIAPETV…FRNAKLRQTK (195 aa). UDP-N-acetyl-alpha-D-glucosamine is bound by residues R319 and K337. The active-site Proton acceptor is H349. UDP-N-acetyl-alpha-D-glucosamine contacts are provided by Y352 and N363. Acetyl-CoA contacts are provided by residues A366, 372 to 373, S409, and R426; that span reads NY. Residues 427–448 are disordered; the sequence is SPQTTKEGAAARFRNAKLRQTK.

The protein in the N-terminal section; belongs to the N-acetylglucosamine-1-phosphate uridyltransferase family. It in the C-terminal section; belongs to the transferase hexapeptide repeat family. Homotrimer. Mg(2+) is required as a cofactor.

The protein resides in the cytoplasm. It carries out the reaction alpha-D-glucosamine 1-phosphate + acetyl-CoA = N-acetyl-alpha-D-glucosamine 1-phosphate + CoA + H(+). The catalysed reaction is N-acetyl-alpha-D-glucosamine 1-phosphate + UTP + H(+) = UDP-N-acetyl-alpha-D-glucosamine + diphosphate. Its pathway is nucleotide-sugar biosynthesis; UDP-N-acetyl-alpha-D-glucosamine biosynthesis; N-acetyl-alpha-D-glucosamine 1-phosphate from alpha-D-glucosamine 6-phosphate (route II): step 2/2. The protein operates within nucleotide-sugar biosynthesis; UDP-N-acetyl-alpha-D-glucosamine biosynthesis; UDP-N-acetyl-alpha-D-glucosamine from N-acetyl-alpha-D-glucosamine 1-phosphate: step 1/1. It functions in the pathway bacterial outer membrane biogenesis; LPS lipid A biosynthesis. Functionally, catalyzes the last two sequential reactions in the de novo biosynthetic pathway for UDP-N-acetylglucosamine (UDP-GlcNAc). The C-terminal domain catalyzes the transfer of acetyl group from acetyl coenzyme A to glucosamine-1-phosphate (GlcN-1-P) to produce N-acetylglucosamine-1-phosphate (GlcNAc-1-P), which is converted into UDP-GlcNAc by the transfer of uridine 5-monophosphate (from uridine 5-triphosphate), a reaction catalyzed by the N-terminal domain. This chain is Bifunctional protein GlmU, found in Bradyrhizobium sp. (strain ORS 278).